Consider the following 867-residue polypeptide: Alanine--tRNA ligase (867 aa).

The Zn(2+) site is built by histidine 555, histidine 559, cysteine 657, and histidine 661.

The protein belongs to the class-II aminoacyl-tRNA synthetase family. Requires Zn(2+) as cofactor.

It is found in the cytoplasm. It catalyses the reaction tRNA(Ala) + L-alanine + ATP = L-alanyl-tRNA(Ala) + AMP + diphosphate. Its function is as follows. Catalyzes the attachment of alanine to tRNA(Ala) in a two-step reaction: alanine is first activated by ATP to form Ala-AMP and then transferred to the acceptor end of tRNA(Ala). Also edits incorrectly charged Ser-tRNA(Ala) and Gly-tRNA(Ala) via its editing domain. In Psychromonas ingrahamii (strain DSM 17664 / CCUG 51855 / 37), this protein is Alanine--tRNA ligase.